Here is a 215-residue protein sequence, read N- to C-terminus: Large ribosomal subunit protein uL4 (215 aa).

A disordered region spans residues 46–76 (TAKSKNRAEVSGGGRKPWAQKGGGRARAGSI). Residues 56–71 (SGGGRKPWAQKGGGRA) show a composition bias toward gly residues.

Belongs to the universal ribosomal protein uL4 family. Part of the 50S ribosomal subunit.

One of the primary rRNA binding proteins, this protein initially binds near the 5'-end of the 23S rRNA. It is important during the early stages of 50S assembly. It makes multiple contacts with different domains of the 23S rRNA in the assembled 50S subunit and ribosome. Functionally, forms part of the polypeptide exit tunnel. This is Large ribosomal subunit protein uL4 from Helicobacter pylori (strain HPAG1).